The chain runs to 429 residues: Ribosomal RNA small subunit methyltransferase B (429 aa).

S-adenosyl-L-methionine contacts are provided by residues 254 to 260 (CAAPGGK), D277, D303, and D322. Catalysis depends on C375, which acts as the Nucleophile.

The protein belongs to the class I-like SAM-binding methyltransferase superfamily. RsmB/NOP family.

It localises to the cytoplasm. The catalysed reaction is cytidine(967) in 16S rRNA + S-adenosyl-L-methionine = 5-methylcytidine(967) in 16S rRNA + S-adenosyl-L-homocysteine + H(+). In terms of biological role, specifically methylates the cytosine at position 967 (m5C967) of 16S rRNA. The protein is Ribosomal RNA small subunit methyltransferase B of Escherichia coli O127:H6 (strain E2348/69 / EPEC).